The chain runs to 223 residues: Cytidylate kinase (223 aa).

12-20 (GPAGSGKST) contributes to the ATP binding site.

The protein belongs to the cytidylate kinase family. Type 1 subfamily.

Its subcellular location is the cytoplasm. The enzyme catalyses CMP + ATP = CDP + ADP. It catalyses the reaction dCMP + ATP = dCDP + ADP. This Aster yellows witches'-broom phytoplasma (strain AYWB) protein is Cytidylate kinase.